A 316-amino-acid chain; its full sequence is PAK4-inhibitor inka1 (316 aa).

Residues 108–130 are disordered; the sequence is YSEVSGSSLRGEEDDIVEEESET. The segment covering 119–128 has biased composition (acidic residues); it reads EEDDIVEEES. 2 inka box regions span residues 182–219 and 289–316; these read DSQDWTGCLLSQSRSRQPLILGDNSFADLVKQWMDLPE and SDIAEASTNLLNCRSRRPIICNEGAGFL.

The protein belongs to the INKA family. In terms of assembly, interacts with pak4/pak5.

It is found in the nucleus. The protein resides in the cytoplasm. Its function is as follows. Inhibitor of the serine/threonine-protein kinase pak4/pak5. Acts by binding pak4/pak5 in a substrate-like manner, inhibiting the protein kinase activity. Required for the proper migration of neural crest cells during embryonic development, probably by inhibiting pak4/pak5. The protein is PAK4-inhibitor inka1 of Xenopus laevis (African clawed frog).